The following is a 192-amino-acid chain: Ethylene-responsive transcription factor ERF027 (192 aa).

The segment at residues 18–74 is a DNA-binding region (AP2/ERF); sequence VYRGIRCRSGKWVSEIREPRKTTRIWLGTYPMAEMAAAAYDVAAMALKGREAVLNFP. Disordered stretches follow at residues 104–132 and 167–192; these read CEEG…HVDN and APPS…LWGY. Acidic residues predominate over residues 179-192; it reads DSPENSNDEDLWGY.

Belongs to the AP2/ERF transcription factor family. ERF subfamily.

Its subcellular location is the nucleus. Its function is as follows. Probably acts as a transcriptional activator. Binds to the GCC-box pathogenesis-related promoter element. May be involved in the regulation of gene expression by stress factors and by components of stress signal transduction pathways. This is Ethylene-responsive transcription factor ERF027 (ERF027) from Arabidopsis thaliana (Mouse-ear cress).